Here is a 408-residue protein sequence, read N- to C-terminus: MSAQNLAPPLNTLDFDKKPEETRVVVAMSGGVDSSVVAGLLKQQGYDVLGITLQLYDHGAAVHRAGSCCAGQDIDDARHVCETLGIPHYVLDYEKRFRETVINPFAESYVAGETPIPCVSCNQTVKFADLLATAKELGADALATGHYIRSRPNPSSEHPGRRALFRPADADRDQSYFLFATTQEQIDYLRFPLGGLPKAETRRLAEEMGLVVAKKADSQDICFVPQGKYSDIITKLKPNAALAGEIVHLDGRVLGSHEGILHFTIGQRRGIGIATGEPLYVVYLDARSRRVIVGPKEALETHRVYLRDVNWLGDETLAEAASGEGFACYAKVRSTRAPAPAVLHVDATGTYVDLTIGEAGIAPGQACALYSAPGDDARVFGGGFIERSEREPSAEASLKALLASPVAA.

Residues 27–34 and L53 contribute to the ATP site; that span reads AMSGGVDS. C121 (nucleophile) is an active-site residue. The cysteines at positions 121 and 222 are disulfide-linked. Residue G145 participates in ATP binding. The interaction with tRNA stretch occupies residues 172–174; it reads RDQ. C222 acts as the Cysteine persulfide intermediate in catalysis.

It belongs to the MnmA/TRMU family.

The protein localises to the cytoplasm. The enzyme catalyses S-sulfanyl-L-cysteinyl-[protein] + uridine(34) in tRNA + AH2 + ATP = 2-thiouridine(34) in tRNA + L-cysteinyl-[protein] + A + AMP + diphosphate + H(+). In terms of biological role, catalyzes the 2-thiolation of uridine at the wobble position (U34) of tRNA, leading to the formation of s(2)U34. The protein is tRNA-specific 2-thiouridylase MnmA of Rhizobium etli (strain ATCC 51251 / DSM 11541 / JCM 21823 / NBRC 15573 / CFN 42).